A 505-amino-acid polypeptide reads, in one-letter code: Cyclic AMP-dependent transcription factor ATF-2 (505 aa).

Residues 1–7 (MKFKLHV) carry the Nuclear export signal 1 (N-NES) motif. Residues 25-49 (FLCTAPGCGQRFTNEDHLAVHKHKH) form a C2H2-type zinc finger. The residue at position 52 (Thr-52) is a Phosphothreonine; by PKC/PRKCH. Position 62 is a phosphoserine; by VRK1 (Ser-62). Thr-69 carries the post-translational modification Phosphothreonine; by MAPK11 and MAPK14. Thr-71 is subject to Phosphothreonine; by MAPK1, MAPK3, MAPK11, MAPK12, MAPK14 and PLK3. Thr-73 bears the Phosphothreonine; by VRK1 mark. 2 positions are modified to phosphoserine: Ser-90 and Ser-112. Thr-116 is subject to Phosphothreonine. Ser-121 carries the post-translational modification Phosphoserine; by PKC/PRKCA and PKC/PRKCB. Disordered stretches follow at residues 125-155 (EPSV…PLAQ) and 259-373 (PGIP…RQKR). Phosphoserine is present on Ser-136. Positions 282–293 (LTQQHPPVTNGD) are enriched in polar residues. Positions 296–299 (KGHG) are essential for its histone acetyltransferase activity. Over residues 318-334 (PATSTTETPASPAHTTP) the composition is skewed to low complexity. A Phosphoserine modification is found at Ser-328. Residue Ser-340 is modified to Phosphoserine; by PKC/PRKCA and PKC/PRKCB. Positions 346–363 (AANEDPDEKRRKFLERNR) are enriched in basic and acidic residues. One can recognise a bZIP domain in the interval 352–415 (DEKRRKFLER…AQLKQLLLAH (64 aa)). Positions 354 to 374 (KRRKFLERNRAAASRCRQKRK) are basic motif. N6-acetyllysine is present on Lys-357. Ser-367 carries the phosphoserine; by PKC/PRKCA and PKC/PRKCB modification. Residue Lys-374 is modified to N6-acetyllysine. The interval 380–408 (LEKKAEDLSSLNGQLQSEVTLLRNEVAQL) is leucine-zipper. Residues 405 to 414 (VAQLKQLLLA) carry the Nuclear export signal 2 (C-NES) motif. A disordered region spans residues 425–472 (KKSGYHTADKDDSSEDISVPSSPHTEAIQHSSVSTSNGVSSTSKAEAV). Phosphoserine occurs at positions 442 and 446. Residues 443 to 454 (VPSSPHTEAIQH) show a composition bias toward polar residues. The segment covering 455–467 (SSVSTSNGVSSTS) has biased composition (low complexity). Residues Ser-490 and Ser-498 each carry the phosphoserine; by ATM modification.

Belongs to the bZIP family. ATF subfamily. In terms of assembly, binds DNA as a dimer and can form a homodimer in the absence of DNA. Can form a heterodimer with JUN. Heterodimerization is essential for its transcriptional activity. Interacts with SMAD3 and SMAD4. Binds through its N-terminal region to UTF1 which acts as a coactivator of ATF2 transcriptional activity. Interacts with the HK1/VDAC1 complex. Interacts with NBN, MRE11, XPO1, KAT5 and CUL3. In terms of processing, phosphorylation of Thr-69 by MAPK14 and MAPK11, and at Thr-71 by MAPK1/ERK2, MAPK3/ERK1, MAPK11, MAPK12 and MAPK14 in response to external stimulus like insulin causes increased transcriptional activity. Phosphorylated by PLK3 following hyperosmotic stress. Also phosphorylated and activated by JNK and CaMK4. ATM-mediated phosphorylation at Ser-490 and Ser-498 stimulates its function in DNA damage response. Phosphorylation at Ser-62, Thr-73 and Ser-121 activates its transcriptional activity. Phosphorylation at Thr-69 or Thr-71 enhances acetylation of histones H2B and H4. Ubiquitously expressed, with more abundant expression in the brain.

Its subcellular location is the nucleus. It is found in the cytoplasm. The protein resides in the mitochondrion outer membrane. In terms of biological role, transcriptional activator which regulates the transcription of various genes, including those involved in anti-apoptosis, cell growth, and DNA damage response. Dependent on its binding partner, binds to CRE (cAMP response element) consensus sequences (5'-TGACGTCA-3') or to AP-1 (activator protein 1) consensus sequences (5'-TGACTCA-3'). In the nucleus, contributes to global transcription and the DNA damage response, in addition to specific transcriptional activities that are related to cell development, proliferation and death. In the cytoplasm, interacts with and perturbs HK1- and VDAC1-containing complexes at the mitochondrial outer membrane, thereby impairing mitochondrial membrane potential, inducing mitochondrial leakage and promoting cell death. The phosphorylated form (mediated by ATM) plays a role in the DNA damage response and is involved in the ionizing radiation (IR)-induced S phase checkpoint control and in the recruitment of the MRN complex into the IR-induced foci (IRIF). Exhibits histone acetyltransferase (HAT) activity which specifically acetylates histones H2B and H4 in vitro. In concert with CUL3 and RBX1, promotes the degradation of KAT5 thereby attenuating its ability to acetylate and activate ATM. Can elicit oncogenic or tumor suppressor activities depending on the tissue or cell type. The polypeptide is Cyclic AMP-dependent transcription factor ATF-2 (ATF2) (Homo sapiens (Human)).